We begin with the raw amino-acid sequence, 319 residues long: Methionyl-tRNA formyltransferase (319 aa).

Position 114 to 117 (114 to 117 (SLLP)) interacts with (6S)-5,6,7,8-tetrahydrofolate.

The protein belongs to the Fmt family.

The catalysed reaction is L-methionyl-tRNA(fMet) + (6R)-10-formyltetrahydrofolate = N-formyl-L-methionyl-tRNA(fMet) + (6S)-5,6,7,8-tetrahydrofolate + H(+). Its function is as follows. Attaches a formyl group to the free amino group of methionyl-tRNA(fMet). The formyl group appears to play a dual role in the initiator identity of N-formylmethionyl-tRNA by promoting its recognition by IF2 and preventing the misappropriation of this tRNA by the elongation apparatus. In Acinetobacter baylyi (strain ATCC 33305 / BD413 / ADP1), this protein is Methionyl-tRNA formyltransferase.